We begin with the raw amino-acid sequence, 75 residues long: Large ribosomal subunit protein bL31 (75 aa).

The Zn(2+) site is built by Cys16, Cys18, Cys37, and Cys40.

The protein belongs to the bacterial ribosomal protein bL31 family. Type A subfamily. As to quaternary structure, part of the 50S ribosomal subunit. Zn(2+) is required as a cofactor.

Functionally, binds the 23S rRNA. In Baumannia cicadellinicola subsp. Homalodisca coagulata, this protein is Large ribosomal subunit protein bL31.